A 212-amino-acid chain; its full sequence is Ion-translocating oxidoreductase complex subunit G (212 aa).

The helical transmembrane segment at 9-29 (GLLLALFALLCTGLVAVVNQQ) threads the bilayer. Thr176 carries the post-translational modification FMN phosphoryl threonine.

It belongs to the RnfG family. The complex is composed of six subunits: RnfA, RnfB, RnfC, RnfD, RnfE and RnfG. It depends on FMN as a cofactor.

The protein localises to the cell inner membrane. Functionally, part of a membrane-bound complex that couples electron transfer with translocation of ions across the membrane. The chain is Ion-translocating oxidoreductase complex subunit G from Shewanella oneidensis (strain ATCC 700550 / JCM 31522 / CIP 106686 / LMG 19005 / NCIMB 14063 / MR-1).